The primary structure comprises 128 residues: uncharacterized protein (128 aa).

Residues 1-28 (MDADDFGKKDLENGNESPKKPIFMKDWK) are compositionally biased toward basic and acidic residues. Positions 1-30 (MDADDFGKKDLENGNESPKKPIFMKDWKNS) are disordered.

It localises to the cytoplasm. The protein resides in the nucleus. This is an uncharacterized protein from Schizosaccharomyces pombe (strain 972 / ATCC 24843) (Fission yeast).